The following is a 197-amino-acid chain: Small ribosomal subunit protein uS4 (197 aa).

In terms of domain architecture, S4 RNA-binding spans 87–147 (LRLDNVLFRL…EKSKSSARYK (61 aa)).

The protein belongs to the universal ribosomal protein uS4 family. As to quaternary structure, part of the 30S ribosomal subunit. Contacts protein S5. The interaction surface between S4 and S5 is involved in control of translational fidelity.

One of the primary rRNA binding proteins, it binds directly to 16S rRNA where it nucleates assembly of the body of the 30S subunit. In terms of biological role, with S5 and S12 plays an important role in translational accuracy. The polypeptide is Small ribosomal subunit protein uS4 (Lachnospira eligens (strain ATCC 27750 / DSM 3376 / VPI C15-48 / C15-B4) (Eubacterium eligens)).